A 106-amino-acid polypeptide reads, in one-letter code: Violacin-A (106 aa).

Positions 1–29 (MDAQKMKMVIGLVLVATTAFALMIPAASA) are cleaved as a signal peptide. Residues 30–79 (VDDFITRRAYDNLVKSGAIKDIPVMAKTIISNPVLEEGMLTYYTNKKLGD) constitute a propeptide that is removed on maturation. 3 disulfide bridges follow: Cys-84–Cys-98, Cys-88–Cys-100, and Cys-93–Cys-105.

The protein belongs to the cyclotide family. Moebius subfamily. Post-translationally, violacin-A is not a cyclic peptide.

Its function is as follows. Probably participates in a plant defense mechanism. Has low hemolytic activity. In Viola odorata (Sweet violet), this protein is Violacin-A.